The primary structure comprises 152 residues: Natriuretic peptides A (152 aa).

The first 24 residues, 1–24 (MGSSAITTSFLLFVAFQLPGQTGA), serve as a signal peptide directing secretion. 2 consecutive propeptides follow at residues 25–122 (NPVY…TAPR) and 92–102 (EMGAPSDGDPG). The segment at 50 to 108 (MPLEDEAVPSQVLSEQNEEAGAPLSPLSEVPPWDGGRSTQPREMGAPSDGDPGNPPRSV) is disordered. The residue at position 128 (Ser-128) is a Phosphoserine. An intrachain disulfide couples Cys-129 to Cys-145. An important for degradation of atrial natriuretic peptide by IDE region spans residues 146–150 (NSFRY).

This sequence belongs to the natriuretic peptide family. As to quaternary structure, homodimer; disulfide-linked antiparallel dimer. In terms of processing, the precursor molecule is proteolytically cleaved by CORIN at Arg-122 to produce the atrial natriuretic peptide. Undergoes further proteolytic cleavage by unknown proteases to give rise to long-acting natriuretic peptide, vessel dilator and kaliuretic peptide. Additional processing gives rise to the auriculin and atriopeptin peptides. In the kidneys, alternative processing by an unknown protease results in the peptide urodilatin. Cleavage by MME initiates degradation of the factor and thereby regulates its activity. Degradation by IDE results in reduced activation of NPR1 (in vitro). During IDE degradation, the resulting products can temporarily stimulate NPR2 to produce cGMP, before the fragments are completely degraded and inactivated by IDE (in vitro). Post-translationally, degraded by IDE. In terms of processing, phosphorylation on Ser-128 decreases vasorelaxant activity.

Its subcellular location is the secreted. The protein localises to the perikaryon. The protein resides in the cell projection. In terms of biological role, hormone that plays a key role in mediating cardio-renal homeostasis, and is involved in vascular remodeling and regulating energy metabolism. Acts by specifically binding and stimulating NPR1 to produce cGMP, which in turn activates effector proteins, such as PRKG1, that drive various biological responses. Regulates vasodilation, natriuresis, diuresis and aldosterone synthesis and is therefore essential for regulating blood pressure, controlling the extracellular fluid volume and maintaining the fluid-electrolyte balance. Also involved in inhibiting cardiac remodeling and cardiac hypertrophy by inducing cardiomyocyte apoptosis and attenuating the growth of cardiomyocytes and fibroblasts. Plays a role in female pregnancy by promoting trophoblast invasion and spiral artery remodeling in uterus, and thus prevents pregnancy-induced hypertension. In adipose tissue, acts in various cGMP- and PKG-dependent pathways to regulate lipid metabolism and energy homeostasis. This includes up-regulating lipid metabolism and mitochondrial oxygen utilization by activating the AMP-activated protein kinase (AMPK), and increasing energy expenditure by acting via MAPK11 to promote the UCP1-dependent thermogenesis of brown adipose tissue. Binds the clearance receptor NPR3 which removes the hormone from circulation. Its function is as follows. May have a role in cardio-renal homeostasis through regulation of natriuresis, diuresis, vasodilation, and inhibiting aldosterone synthesis. In vitro, promotes the production of cGMP and induces vasodilation. May promote natriuresis, at least in part, by enhancing prostaglandin E2 synthesis resulting in the inhibition of renal Na+-K+-ATPase. However reports on the involvement of this peptide in mammal blood volume and blood pressure homeostasis are conflicting; according to a report, in vivo it is not sufficient to activate cGMP and does not inhibit collecting duct transport nor effect diuresis and natriuresis. Appears to bind to specific receptors that are distinct from the receptors bound by atrial natriuretic peptide and vessel dilator. Possibly enhances protein excretion in urine by decreasing proximal tubular protein reabsorption. Functionally, may have a role in cardio-renal homeostasis through regulation of natriuresis, diuresis, and vasodilation. In vitro, promotes the production of cGMP and induces vasodilation. May promote natriuresis, at least in part, by enhancing prostaglandin E2 synthesis resulting in the inhibition of renal Na+-K+-ATPase. However reports on the involvement of this peptide in mammal blood volume and blood pressure homeostasis are conflicting; according to a report it is not sufficient to activate cGMP and does not inhibit collecting duct transport nor effect diuresis and natriuresis. Appears to bind to specific receptors that are distinct from the receptors bound by the atrial natriuretic and long-acting natriuretic peptides. Possibly functions in protein excretion in urine by maintaining the integrity of the proximal tubules and enhancing protein excretion by decreasing proximal tubular protein reabsorption. May have a role in cardio-renal homeostasis through regulation of diuresis and inhibiting aldosterone synthesis. In vitro, promotes the production of cGMP and induces vasodilation. May promote natriuresis, at least in part, by enhancing prostaglandin E2 synthesis resulting in the inhibition of renal Na+-K+-ATPase. May have a role in potassium excretion but not sodium excretion (natriuresis). Possibly enhances protein excretion in urine by decreasing proximal tubular protein reabsorption. In terms of biological role, hormone produced in the kidneys that appears to be important for maintaining cardio-renal homeostasis. Mediates vasodilation, natriuresis and diuresis primarily in the renal system, in order to maintain the extracellular fluid volume and control the fluid-electrolyte balance. Specifically binds and stimulates cGMP production by renal transmembrane receptors, likely NPR1. Urodilatin not ANP, may be the natriuretic peptide responsible for the regulation of sodium and water homeostasis in the kidney. Its function is as follows. May have a role in cardio-renal homeostasis through regulation of natriuresis and vasodilation. In vivo promotes natriuresis and in vitro, vasodilates renal artery strips. Functionally, may have a role in cardio-renal homeostasis through regulation of regulation of natriuresis and vasodilation. In vivo promotes natriuresis. In vitro, vasodilates intestinal smooth muscle but not smooth muscle strips. May have a role in cardio-renal homeostasis through regulation of natriuresis and vasodilation. In vivo promotes natriuresis. In vitro, selectively vasodilates intestinal and vascular smooth muscle strips. In terms of biological role, may have a role in cardio-renal homeostasis through regulation of natriuresis and vasodilation. In vivo promotes natriuresis. In vitro, selectively vasodilates intestinal smooth muscle but not vascular smooth muscle strips. The sequence is that of Natriuretic peptides A (NPPA) from Ovis aries (Sheep).